A 233-amino-acid chain; its full sequence is Orotidine 5'-phosphate decarboxylase (233 aa).

Substrate-binding positions include Asp11, Lys34, 61–70 (DLKLHDIPNT), Thr117, Arg179, Gln188, Gly208, and Arg209. Lys63 functions as the Proton donor in the catalytic mechanism.

This sequence belongs to the OMP decarboxylase family. Type 1 subfamily. As to quaternary structure, homodimer.

The enzyme catalyses orotidine 5'-phosphate + H(+) = UMP + CO2. Its pathway is pyrimidine metabolism; UMP biosynthesis via de novo pathway; UMP from orotate: step 2/2. Its function is as follows. Catalyzes the decarboxylation of orotidine 5'-monophosphate (OMP) to uridine 5'-monophosphate (UMP). The sequence is that of Orotidine 5'-phosphate decarboxylase from Streptococcus pneumoniae serotype 4 (strain ATCC BAA-334 / TIGR4).